Reading from the N-terminus, the 215-residue chain is MPPTAPPEKMMFQLTLRRRGISDQAVLRTMEEVPREEFVLPADRAEAYRDSAMAIACGQTISQPFVVAYMTEQLKLQKNHRVLEIGTGSGYQAAILSRLCANVLTVERFRTLADKARERLEKLNCFNVEVMLGDGYALPPGAGQFDRIIVTAAMDQIPQSLLDRLEPDGILIAPVGPQHGVQTLVRVTRTGDHFDRKELVDVRFVPAIPGIAREL.

Serine 62 is an active-site residue.

Belongs to the methyltransferase superfamily. L-isoaspartyl/D-aspartyl protein methyltransferase family.

It is found in the cytoplasm. It catalyses the reaction [protein]-L-isoaspartate + S-adenosyl-L-methionine = [protein]-L-isoaspartate alpha-methyl ester + S-adenosyl-L-homocysteine. In terms of biological role, catalyzes the methyl esterification of L-isoaspartyl residues in peptides and proteins that result from spontaneous decomposition of normal L-aspartyl and L-asparaginyl residues. It plays a role in the repair and/or degradation of damaged proteins. The protein is Protein-L-isoaspartate O-methyltransferase of Bradyrhizobium sp. (strain BTAi1 / ATCC BAA-1182).